The chain runs to 545 residues: Chaperonin GroEL 1 (545 aa).

ATP contacts are provided by residues 30-33, K51, 87-91, G415, and D495; these read TLGP and DGTTT.

Belongs to the chaperonin (HSP60) family. In terms of assembly, forms a cylinder of 14 subunits composed of two heptameric rings stacked back-to-back. Interacts with the co-chaperonin GroES.

The protein resides in the cytoplasm. The enzyme catalyses ATP + H2O + a folded polypeptide = ADP + phosphate + an unfolded polypeptide.. Functionally, together with its co-chaperonin GroES, plays an essential role in assisting protein folding. The GroEL-GroES system forms a nano-cage that allows encapsulation of the non-native substrate proteins and provides a physical environment optimized to promote and accelerate protein folding. The protein is Chaperonin GroEL 1 of Sinorhizobium medicae (strain WSM419) (Ensifer medicae).